The chain runs to 51 residues: Non-specific lipid-transfer protein (51 aa).

Belongs to the plant LTP family.

Plant non-specific lipid-transfer proteins transfer phospholipids as well as galactolipids across membranes. May play a role in wax or cutin deposition in the cell walls of expanding epidermal cells and certain secretory tissues. This chain is Non-specific lipid-transfer protein, found in Lycium barbarum (Barbary matrimony-vine).